Reading from the N-terminus, the 518-residue chain is Prosaposin (518 aa).

Positions 1 to 17 are cleaved as a signal peptide; it reads MARRLLTLLGLLAAAVA. Residues 18-60 constitute a propeptide that is removed on maturation; the sequence is SPVLWQKDCAKGPEVWCQSLRTASQCGAVKHCQQNVWSKPAVN. Residues 19 to 59 form the Saposin A-type 1 domain; sequence PVLWQKDCAKGPEVWCQSLRTASQCGAVKHCQQNVWSKPAV. 4 Saposin B-type domains span residues 60–143, 193–277, 307–388, and 399–480; these read NSIP…QSLQ, TEDV…PSVK, TFSV…AANK, and AGGF…GAAK. Cystine bridges form between cysteine 64–cysteine 139, cysteine 67–cysteine 133, and cysteine 95–cysteine 107. Residue asparagine 81 is glycosylated (N-linked (GlcNAc...) asparagine). Residues 144 to 193 constitute a propeptide that is removed on maturation; that stretch reads KHLAAMKLQKQLQSNKIPELDFSELTSPFMANVPLLLYPQDKPKQKSKAT. 3 disulfide bridges follow: cysteine 197–cysteine 273, cysteine 200–cysteine 267, and cysteine 229–cysteine 240. N-linked (GlcNAc...) asparagine glycosylation occurs at asparagine 214. The propeptide occupies 277 to 306; the sequence is KSVPLQTLVPAQVVHEVKMETVEKATVQEK. 3 cysteine pairs are disulfide-bonded: cysteine 311/cysteine 384, cysteine 314/cysteine 378, and cysteine 342/cysteine 353. N-linked (GlcNAc...) asparagine glycosylation occurs at asparagine 328. A propeptide spanning residues 388 to 398 is cleaved from the precursor; it reads KPPQQPVVVKP. 3 disulfide bridges follow: cysteine 403–cysteine 476, cysteine 406–cysteine 470, and cysteine 434–cysteine 445. N-linked (GlcNAc...) asparagine glycosylation occurs at asparagine 420. The propeptide occupies 480–518; it reads KKPLLGEDACVWGPGYWCKNMETAAQCNAVDHCRRHVWN. One can recognise a Saposin A-type 2 domain in the interval 482 to 518; it reads PLLGEDACVWGPGYWCKNMETAAQCNAVDHCRRHVWN.

As to quaternary structure, saposin-B is a homodimer. This precursor is proteolytically processed to 4 small peptides, which are similar to each other and are sphingolipid hydrolase activator proteins.

Its subcellular location is the lysosome. The protein localises to the secreted. In terms of biological role, the lysosomal degradation of sphingolipids takes place by the sequential action of specific hydrolases. Some of these enzymes require specific low-molecular mass, non-enzymatic proteins: the sphingolipids activator proteins (coproteins). Functionally, saposin-A and saposin-C stimulate the hydrolysis of glucosylceramide by beta-glucosylceramidase (EC 3.2.1.45) and galactosylceramide by beta-galactosylceramidase (EC 3.2.1.46). Saposin-C apparently acts by combining with the enzyme and acidic lipid to form an activated complex, rather than by solubilizing the substrate. Its function is as follows. Saposin-B stimulates the hydrolysis of galacto-cerebroside sulfate by arylsulfatase A (EC 3.1.6.8), GM1 gangliosides by beta-galactosidase (EC 3.2.1.23) and globotriaosylceramide by alpha-galactosidase A (EC 3.2.1.22). Saposin-B forms a solubilizing complex with the substrates of the sphingolipid hydrolases. Saposin-D is a specific sphingomyelin phosphodiesterase activator (EC 3.1.4.12). The sequence is that of Prosaposin (PSAP) from Gallus gallus (Chicken).